Here is a 494-residue protein sequence, read N- to C-terminus: Glutamyl-tRNA(Gln) amidotransferase subunit A, mitochondrial (494 aa).

Residues lysine 79 and serine 160 each act as charge relay system in the active site. Catalysis depends on serine 184, which acts as the Acyl-ester intermediate.

Belongs to the amidase family. GatA subfamily. In terms of assembly, subunit of the heterotrimeric GatCAB amidotransferase (AdT) complex, composed of A, B and C subunits.

The protein resides in the mitochondrion. It catalyses the reaction L-glutamyl-tRNA(Gln) + L-glutamine + ATP + H2O = L-glutaminyl-tRNA(Gln) + L-glutamate + ADP + phosphate + H(+). Functionally, allows the formation of correctly charged Gln-tRNA(Gln) through the transamidation of misacylated Glu-tRNA(Gln) in the mitochondria. The reaction takes place in the presence of glutamine and ATP through an activated gamma-phospho-Glu-tRNA(Gln). The chain is Glutamyl-tRNA(Gln) amidotransferase subunit A, mitochondrial from Aedes aegypti (Yellowfever mosquito).